The primary structure comprises 715 residues: Fatty acid oxidation complex subunit alpha (715 aa).

The tract at residues 1 to 190 (MTTTSAFMLN…KAGLVDDVVP (190 aa)) is enoyl-CoA hydratase. The 3-hydroxyacyl-CoA dehydrogenase stretch occupies residues 306–715 (GPLNSVGILG…WTNGETDQGN (410 aa)).

In the N-terminal section; belongs to the enoyl-CoA hydratase/isomerase family. The protein in the central section; belongs to the 3-hydroxyacyl-CoA dehydrogenase family. In terms of assembly, heterotetramer of two alpha chains (FadJ) and two beta chains (FadI).

Its subcellular location is the cytoplasm. The enzyme catalyses a (3S)-3-hydroxyacyl-CoA = a (2E)-enoyl-CoA + H2O. It catalyses the reaction a 4-saturated-(3S)-3-hydroxyacyl-CoA = a (3E)-enoyl-CoA + H2O. It carries out the reaction a (3S)-3-hydroxyacyl-CoA + NAD(+) = a 3-oxoacyl-CoA + NADH + H(+). The catalysed reaction is (3S)-3-hydroxybutanoyl-CoA = (3R)-3-hydroxybutanoyl-CoA. It functions in the pathway lipid metabolism; fatty acid beta-oxidation. Catalyzes the formation of a hydroxyacyl-CoA by addition of water on enoyl-CoA. Also exhibits 3-hydroxyacyl-CoA epimerase and 3-hydroxyacyl-CoA dehydrogenase activities. This chain is Fatty acid oxidation complex subunit alpha, found in Salmonella agona (strain SL483).